Consider the following 414-residue polypeptide: Serine hydroxymethyltransferase (414 aa).

(6S)-5,6,7,8-tetrahydrofolate contacts are provided by residues Leu121 and Gly125 to Leu127. Residue Lys229 is modified to N6-(pyridoxal phosphate)lysine.

This sequence belongs to the SHMT family. Homodimer. The cofactor is pyridoxal 5'-phosphate.

The protein localises to the cytoplasm. It catalyses the reaction (6R)-5,10-methylene-5,6,7,8-tetrahydrofolate + glycine + H2O = (6S)-5,6,7,8-tetrahydrofolate + L-serine. The protein operates within one-carbon metabolism; tetrahydrofolate interconversion. It participates in amino-acid biosynthesis; glycine biosynthesis; glycine from L-serine: step 1/1. Functionally, catalyzes the reversible interconversion of serine and glycine with tetrahydrofolate (THF) serving as the one-carbon carrier. This reaction serves as the major source of one-carbon groups required for the biosynthesis of purines, thymidylate, methionine, and other important biomolecules. Also exhibits THF-independent aldolase activity toward beta-hydroxyamino acids, producing glycine and aldehydes, via a retro-aldol mechanism. This Polaromonas sp. (strain JS666 / ATCC BAA-500) protein is Serine hydroxymethyltransferase.